The primary structure comprises 263 residues: Retinoic acid early transcript 1E (263 aa).

The signal sequence occupies residues Met-1 to Gly-30. Residues His-31–Asp-116 form an MHC class I alpha-1 like; down-regulates the cell surface expression of KLRK1 region. Residues His-31–Asp-225 are Extracellular-facing. 3 N-linked (GlcNAc...) asparagine glycosylation sites follow: Asn-36, Asn-154, and Asn-212. The interval Pro-117 to Thr-207 is MHC class I alpha-2 like; down-regulates the cell surface expression of KLRK1. Cysteines 126 and 189 form a disulfide. A helical transmembrane segment spans residues Arg-226–Trp-248. The Cytoplasmic segment spans residues Gln-249–Ser-263.

Belongs to the MHC class I family. As to quaternary structure, binds to KLRK1/NKG2D. In terms of assembly, (Microbial infection) Contrary to other family members, does not interact with CMV glycoprotein UL16. Predominantly expressed in the skin, but also expressed in testis and trachea. Up-regulated in tumor cells of different origins. Expression progressively decreased after treatment of tumor cells with retinoic acid.

It is found in the membrane. The protein localises to the secreted. Functionally, binds and activates the KLRK1/NKG2D receptor, mediating natural killer cell cytotoxicity. The sequence is that of Retinoic acid early transcript 1E from Homo sapiens (Human).